Consider the following 324-residue polypeptide: MDRERYDKVIEACSLSKDLEILSFGDQTVIGERGINLSGGQKQRIHIARALYQDADIYLFDDPFSAVDAHTGSHLFKEALRGLLCSKSVIYVTHQVEFLPSADLTLVMKDGRISQAGKYNDILISGTDFRELIGAHQESLAVVGSADASSVSENSALDEENGVVRDDIGFDGKQESQDLKNDKLDSGEPQRQFVQEEERAKGSVALDVYWKYITLAYGGALVPFILLGQILFQLLQIGSNYWMAWATPISEDVQAPVKLSTLMVVYVALAFGSSLCILVRATLLVTAGYKTATELFHKMHHCIFRSPMSFKIAKTCSKTCIYSS.

The region spanning 2–111 (DRERYDKVIE…ADLTLVMKDG (110 aa)) is the ABC transporter domain. 2 helical membrane passes run 212–232 (YITL…QILF) and 259–279 (LSTL…CILV). The ABC transmembrane type-1 domain occupies 222-324 (VPFILLGQIL…TCSKTCIYSS (103 aa)).

Belongs to the ABC transporter superfamily.

The protein localises to the membrane. This chain is Probable non-intrinsic ABC protein 5 (NAP5), found in Arabidopsis thaliana (Mouse-ear cress).